A 107-amino-acid polypeptide reads, in one-letter code: Metallothionein-1 (107 aa).

This sequence belongs to the metallothionein superfamily. Type 7 family.

Its function is as follows. The metallothioneins are involved in the cellular sequestration of toxic metal ions. Binds 12 cadmium ions per molecule. This is Metallothionein-1 from Tetrahymena thermophila.